The following is a 216-amino-acid chain: Elongation factor Ts (216 aa).

Residues 81-84 (TDFV) are involved in Mg(2+) ion dislocation from EF-Tu.

The protein belongs to the EF-Ts family.

The protein resides in the cytoplasm. Functionally, associates with the EF-Tu.GDP complex and induces the exchange of GDP to GTP. It remains bound to the aminoacyl-tRNA.EF-Tu.GTP complex up to the GTP hydrolysis stage on the ribosome. This chain is Elongation factor Ts, found in Geobacter metallireducens (strain ATCC 53774 / DSM 7210 / GS-15).